The chain runs to 224 residues: Pyridoxine/pyridoxamine 5'-phosphate oxidase (224 aa).

Residues 19 to 22 (RGEY) and K81 each bind substrate. FMN-binding positions include 76-81 (RSVLCK), 91-92 (FT), K98, and Q120. Y138 and R142 together coordinate substrate. FMN contacts are provided by residues 155 to 156 (QS) and W201. Substrate is bound at residue 207–209 (RMH). Position 211 (R211) interacts with FMN.

It belongs to the pyridoxamine 5'-phosphate oxidase family. As to quaternary structure, homodimer. FMN is required as a cofactor.

The enzyme catalyses pyridoxamine 5'-phosphate + O2 + H2O = pyridoxal 5'-phosphate + H2O2 + NH4(+). The catalysed reaction is pyridoxine 5'-phosphate + O2 = pyridoxal 5'-phosphate + H2O2. It participates in cofactor metabolism; pyridoxal 5'-phosphate salvage; pyridoxal 5'-phosphate from pyridoxamine 5'-phosphate: step 1/1. The protein operates within cofactor metabolism; pyridoxal 5'-phosphate salvage; pyridoxal 5'-phosphate from pyridoxine 5'-phosphate: step 1/1. In terms of biological role, catalyzes the oxidation of either pyridoxine 5'-phosphate (PNP) or pyridoxamine 5'-phosphate (PMP) into pyridoxal 5'-phosphate (PLP). This is Pyridoxine/pyridoxamine 5'-phosphate oxidase from Mycobacterium bovis (strain ATCC BAA-935 / AF2122/97).